The following is a 143-amino-acid chain: 3-dehydroquinate dehydratase (143 aa).

Catalysis depends on Y22, which acts as the Proton acceptor. The substrate site is built by N73, H79, and D86. Catalysis depends on H99, which acts as the Proton donor. Substrate contacts are provided by residues 100-101 (IS) and R110.

It belongs to the type-II 3-dehydroquinase family. In terms of assembly, homododecamer.

It carries out the reaction 3-dehydroquinate = 3-dehydroshikimate + H2O. Its pathway is metabolic intermediate biosynthesis; chorismate biosynthesis; chorismate from D-erythrose 4-phosphate and phosphoenolpyruvate: step 3/7. In terms of biological role, catalyzes a trans-dehydration via an enolate intermediate. The sequence is that of 3-dehydroquinate dehydratase from Mycobacterium avium (strain 104).